The primary structure comprises 476 residues: 3-isopropylmalate dehydratase large subunit (476 aa).

The [4Fe-4S] cluster site is built by C353, C413, and C416.

The protein belongs to the aconitase/IPM isomerase family. LeuC type 1 subfamily. Heterodimer of LeuC and LeuD. It depends on [4Fe-4S] cluster as a cofactor.

It catalyses the reaction (2R,3S)-3-isopropylmalate = (2S)-2-isopropylmalate. Its pathway is amino-acid biosynthesis; L-leucine biosynthesis; L-leucine from 3-methyl-2-oxobutanoate: step 2/4. Functionally, catalyzes the isomerization between 2-isopropylmalate and 3-isopropylmalate, via the formation of 2-isopropylmaleate. This Yersinia pseudotuberculosis serotype IB (strain PB1/+) protein is 3-isopropylmalate dehydratase large subunit.